The chain runs to 663 residues: UvrABC system protein B (663 aa).

Over residues 1 to 10 the composition is skewed to basic and acidic residues; that stretch reads MIDKRDDKPF. The interval 1-23 is disordered; the sequence is MIDKRDDKPFKLKSKYKPSGDQP. Residues 31–418 enclose the Helicase ATP-binding domain; that stretch reads DNIEGGEKAQ…TNTIIEQIIR (388 aa). 44–51 is a binding site for ATP; it reads GATGTGKT. The Beta-hairpin motif lies at 97 to 120; sequence YYDYYQPEAYVPSSDTYIEKDSSV. In terms of domain architecture, Helicase C-terminal spans 435-597; it reads QMDDLLGEIN…IVPQTIKKDI (163 aa). The region spanning 627–662 is the UVR domain; that stretch reads KEAINALQKQMQEAAELLDFELAAQMRDLILELKLM.

Belongs to the UvrB family. In terms of assembly, forms a heterotetramer with UvrA during the search for lesions. Interacts with UvrC in an incision complex.

It localises to the cytoplasm. Its function is as follows. The UvrABC repair system catalyzes the recognition and processing of DNA lesions. A damage recognition complex composed of 2 UvrA and 2 UvrB subunits scans DNA for abnormalities. Upon binding of the UvrA(2)B(2) complex to a putative damaged site, the DNA wraps around one UvrB monomer. DNA wrap is dependent on ATP binding by UvrB and probably causes local melting of the DNA helix, facilitating insertion of UvrB beta-hairpin between the DNA strands. Then UvrB probes one DNA strand for the presence of a lesion. If a lesion is found the UvrA subunits dissociate and the UvrB-DNA preincision complex is formed. This complex is subsequently bound by UvrC and the second UvrB is released. If no lesion is found, the DNA wraps around the other UvrB subunit that will check the other stand for damage. The polypeptide is UvrABC system protein B (Streptococcus pyogenes serotype M18 (strain MGAS8232)).